A 280-amino-acid chain; its full sequence is 2-dehydro-3-deoxyphosphooctonate aldolase (280 aa).

Belongs to the KdsA family.

Its subcellular location is the cytoplasm. It catalyses the reaction D-arabinose 5-phosphate + phosphoenolpyruvate + H2O = 3-deoxy-alpha-D-manno-2-octulosonate-8-phosphate + phosphate. It participates in carbohydrate biosynthesis; 3-deoxy-D-manno-octulosonate biosynthesis; 3-deoxy-D-manno-octulosonate from D-ribulose 5-phosphate: step 2/3. It functions in the pathway bacterial outer membrane biogenesis; lipopolysaccharide biosynthesis. In Colwellia psychrerythraea (strain 34H / ATCC BAA-681) (Vibrio psychroerythus), this protein is 2-dehydro-3-deoxyphosphooctonate aldolase.